Here is a 643-residue protein sequence, read N- to C-terminus: 1-deoxy-D-xylulose-5-phosphate synthase (643 aa).

Thiamine diphosphate is bound by residues His72 and 113–115 (GHA). Asp144 lines the Mg(2+) pocket. Thiamine diphosphate is bound by residues 145–146 (GA), Asn174, Tyr287, and Glu370. A Mg(2+)-binding site is contributed by Asn174.

This sequence belongs to the transketolase family. DXPS subfamily. Homodimer. Mg(2+) serves as cofactor. Requires thiamine diphosphate as cofactor.

The enzyme catalyses D-glyceraldehyde 3-phosphate + pyruvate + H(+) = 1-deoxy-D-xylulose 5-phosphate + CO2. Its pathway is metabolic intermediate biosynthesis; 1-deoxy-D-xylulose 5-phosphate biosynthesis; 1-deoxy-D-xylulose 5-phosphate from D-glyceraldehyde 3-phosphate and pyruvate: step 1/1. Functionally, catalyzes the acyloin condensation reaction between C atoms 2 and 3 of pyruvate and glyceraldehyde 3-phosphate to yield 1-deoxy-D-xylulose-5-phosphate (DXP). This Prochlorococcus marinus (strain MIT 9211) protein is 1-deoxy-D-xylulose-5-phosphate synthase.